A 103-amino-acid polypeptide reads, in one-letter code: Small ribosomal subunit protein uS10 (103 aa).

The protein belongs to the universal ribosomal protein uS10 family. As to quaternary structure, part of the 30S ribosomal subunit.

Its function is as follows. Involved in the binding of tRNA to the ribosomes. In Marinomonas sp. (strain MWYL1), this protein is Small ribosomal subunit protein uS10.